A 308-amino-acid polypeptide reads, in one-letter code: Ribosomal RNA small subunit methyltransferase H (308 aa).

S-adenosyl-L-methionine is bound by residues 46 to 48 (AGH), Asp63, Tyr87, Asp108, and Gln115. The tract at residues 269–308 (TKRPVEASEEERGRNPRARSAKLRAAEKVAAPEGLPEVEV) is disordered. The segment covering 271–282 (RPVEASEEERGR) has biased composition (basic and acidic residues).

The protein belongs to the methyltransferase superfamily. RsmH family.

The protein localises to the cytoplasm. It catalyses the reaction cytidine(1402) in 16S rRNA + S-adenosyl-L-methionine = N(4)-methylcytidine(1402) in 16S rRNA + S-adenosyl-L-homocysteine + H(+). Its function is as follows. Specifically methylates the N4 position of cytidine in position 1402 (C1402) of 16S rRNA. This chain is Ribosomal RNA small subunit methyltransferase H, found in Deinococcus geothermalis (strain DSM 11300 / CIP 105573 / AG-3a).